We begin with the raw amino-acid sequence, 152 residues long: Transcriptional regulator MraZ (152 aa).

SpoVT-AbrB domains lie at 5–52 (ATMV…PLPE) and 81–124 (ASEC…DEQT).

This sequence belongs to the MraZ family. As to quaternary structure, forms oligomers.

The protein localises to the cytoplasm. Its subcellular location is the nucleoid. Functionally, negatively regulates its own expression and that of the subsequent genes in the proximal part of the division and cell wall (dcw) gene cluster. Acts by binding directly to DNA. May also regulate the expression of genes outside the dcw cluster. This is Transcriptional regulator MraZ from Yersinia pseudotuberculosis serotype O:1b (strain IP 31758).